The primary structure comprises 106 residues: Trp operon repressor homolog (106 aa).

Residues 59-82 (QREIQQILNTSAATITRGSNMIKI) mediate DNA binding.

Belongs to the TrpR family. As to quaternary structure, homodimer.

The protein resides in the cytoplasm. Functionally, this protein is an aporepressor. When complexed with L-tryptophan it binds the operator region of the trp operon and prevents the initiation of transcription. The chain is Trp operon repressor homolog from Histophilus somni (strain 129Pt) (Haemophilus somnus).